Reading from the N-terminus, the 222-residue chain is Translation initiation factor 6 (222 aa).

It belongs to the eIF-6 family.

In terms of biological role, binds to the 50S ribosomal subunit and prevents its association with the 30S ribosomal subunit to form the 70S initiation complex. This is Translation initiation factor 6 from Methanocorpusculum labreanum (strain ATCC 43576 / DSM 4855 / Z).